We begin with the raw amino-acid sequence, 402 residues long: UPF0261 protein mll9388 (402 aa).

It belongs to the UPF0261 family.

The polypeptide is UPF0261 protein mll9388 (Mesorhizobium japonicum (strain LMG 29417 / CECT 9101 / MAFF 303099) (Mesorhizobium loti (strain MAFF 303099))).